The chain runs to 129 residues: Ig lambda-1 chain V regions MOPC 104E/RPC20/J558/S104 (129 aa).

Residues 1–19 (MAWISLILSLLALSSGAIS) form the signal peptide. The residue at position 20 (Q20) is a Pyrrolidone carboxylic acid. The Ig-like domain occupies 20–125 (QAVVTQESAL…HWVFGGGTKL (106 aa)).

The polypeptide is Ig lambda-1 chain V regions MOPC 104E/RPC20/J558/S104 (Mus musculus (Mouse)).